The primary structure comprises 99 residues: Malonate decarboxylase acyl carrier protein (99 aa).

Ser25 carries the O-(phosphoribosyl dephospho-coenzyme A)serine modification.

It belongs to the MdcC family. Covalently binds the prosthetic group of malonate decarboxylase.

It localises to the cytoplasm. Its function is as follows. Subunit of malonate decarboxylase, it is an acyl carrier protein to which acetyl and malonyl thioester residues are bound via a 2'-(5''-phosphoribosyl)-3'-dephospho-CoA prosthetic group and turn over during the catalytic mechanism. The protein is Malonate decarboxylase acyl carrier protein of Stutzerimonas stutzeri (strain A1501) (Pseudomonas stutzeri).